Reading from the N-terminus, the 101-residue chain is Small ribosomal subunit protein uS14 (101 aa).

It belongs to the universal ribosomal protein uS14 family. Part of the 30S ribosomal subunit. Contacts proteins S3 and S10.

In terms of biological role, binds 16S rRNA, required for the assembly of 30S particles and may also be responsible for determining the conformation of the 16S rRNA at the A site. The sequence is that of Small ribosomal subunit protein uS14 from Sphingopyxis alaskensis (strain DSM 13593 / LMG 18877 / RB2256) (Sphingomonas alaskensis).